The sequence spans 575 residues: Potassium-transporting ATPase potassium-binding subunit (575 aa).

Helical transmembrane passes span 4 to 24 (SAWG…WPVG), 61 to 81 (LRYA…VYAL), 133 to 153 (GLAV…FALI), 180 to 200 (LWVL…QGVI), 258 to 278 (LANL…CFAF), 289 to 309 (WAVL…VIPA), 344 to 364 (IDAS…AVIA), 372 to 392 (LGGM…GGVG), 394 to 414 (GLYG…LMIG), 431 to 451 (LISI…AVAV), 499 to 519 (LLGL…LAIA), and 545 to 565 (LLIG…LALG).

The protein belongs to the KdpA family. In terms of assembly, the system is composed of three essential subunits: KdpA, KdpB and KdpC.

The protein resides in the cell inner membrane. Functionally, part of the high-affinity ATP-driven potassium transport (or Kdp) system, which catalyzes the hydrolysis of ATP coupled with the electrogenic transport of potassium into the cytoplasm. This subunit binds the periplasmic potassium ions and delivers the ions to the membrane domain of KdpB through an intramembrane tunnel. This Variovorax paradoxus (strain S110) protein is Potassium-transporting ATPase potassium-binding subunit.